A 124-amino-acid polypeptide reads, in one-letter code: Large ribosomal subunit protein bL12 (124 aa).

This sequence belongs to the bacterial ribosomal protein bL12 family. As to quaternary structure, homodimer. Part of the ribosomal stalk of the 50S ribosomal subunit. Forms a multimeric L10(L12)X complex, where L10 forms an elongated spine to which 2 to 4 L12 dimers bind in a sequential fashion. Binds GTP-bound translation factors.

Its function is as follows. Forms part of the ribosomal stalk which helps the ribosome interact with GTP-bound translation factors. Is thus essential for accurate translation. This Rickettsia akari (strain Hartford) protein is Large ribosomal subunit protein bL12.